A 234-amino-acid polypeptide reads, in one-letter code: MKVGIIAAMEEELTLLVDRLDNCEEVQLGHCKYYTGQINGVEVGLMRCGIGKVNAAIGTTLMIDKLKPKCLINTGVAGGFINEMNVGDIVISSSVRHHDADATAFGYELGQIPDMPSEFQADRRLVEMATKVNLKSKARIFEGPVFSGDSFIHTTEQVENILKNFPQIMAVEMEGASIAQTSHLFNIPFVLIRSISDKVRETKSADTYTQSMEESAKNSVQVVFEMVEQLKEGM.

The active-site Proton acceptor is glutamate 12. Substrate contacts are provided by residues glycine 78, isoleucine 152, and 173–174 (ME). The Proton donor role is filled by aspartate 197.

Belongs to the PNP/UDP phosphorylase family. MtnN subfamily.

The enzyme catalyses S-adenosyl-L-homocysteine + H2O = S-(5-deoxy-D-ribos-5-yl)-L-homocysteine + adenine. It catalyses the reaction S-methyl-5'-thioadenosine + H2O = 5-(methylsulfanyl)-D-ribose + adenine. The catalysed reaction is 5'-deoxyadenosine + H2O = 5-deoxy-D-ribose + adenine. Its pathway is amino-acid biosynthesis; L-methionine biosynthesis via salvage pathway; S-methyl-5-thio-alpha-D-ribose 1-phosphate from S-methyl-5'-thioadenosine (hydrolase route): step 1/2. Functionally, catalyzes the irreversible cleavage of the glycosidic bond in both 5'-methylthioadenosine (MTA) and S-adenosylhomocysteine (SAH/AdoHcy) to adenine and the corresponding thioribose, 5'-methylthioribose and S-ribosylhomocysteine, respectively. Also cleaves 5'-deoxyadenosine, a toxic by-product of radical S-adenosylmethionine (SAM) enzymes, into 5-deoxyribose and adenine. This is 5'-methylthioadenosine/S-adenosylhomocysteine nucleosidase from Desulfotalea psychrophila (strain LSv54 / DSM 12343).